We begin with the raw amino-acid sequence, 99 residues long: Plastocyanin (99 aa).

Positions 1–99 constitute a Plastocyanin-like domain; the sequence is VEILLGGEDG…AGMVGKVTVN (99 aa). His37, Cys84, His87, and Met92 together coordinate Cu cation.

The protein belongs to the plastocyanin family. The cofactor is Cu(2+).

It is found in the plastid. The protein resides in the chloroplast thylakoid membrane. Its function is as follows. Participates in electron transfer between P700 and the cytochrome b6-f complex in photosystem I. The chain is Plastocyanin (PETE) from Sambucus nigra (European elder).